Here is a 284-residue protein sequence, read N- to C-terminus: Co-chaperone protein DjlA (284 aa).

The Periplasmic segment spans residues 1–6 (MHIFGK). A helical membrane pass occupies residues 7–30 (ILGAFFGLLLGGPFGLLFGLFIGH). Over 31–284 (QFDKARRLSQ…DLIKKVKGFK (254 aa)) the chain is Cytoplasmic. The 67-residue stretch at 218–284 (DAYKILDVSP…DLIKKVKGFK (67 aa)) folds into the J domain.

Homodimer.

It is found in the cell inner membrane. In terms of biological role, regulatory DnaK co-chaperone. Direct interaction between DnaK and DjlA is needed for the induction of the wcaABCDE operon, involved in the synthesis of a colanic acid polysaccharide capsule, possibly through activation of the RcsB/RcsC phosphotransfer signaling pathway. The colanic acid capsule may help the bacterium survive conditions outside the host. The sequence is that of Co-chaperone protein DjlA from Vibrio parahaemolyticus serotype O3:K6 (strain RIMD 2210633).